The following is a 336-amino-acid chain: Delta(1)-pyrroline-2-carboxylate reductase (336 aa).

S47 acts as the Charge relay system in catalysis. H48 (proton donor) is an active-site residue. Substrate is bound at residue R52. Residue 120 to 124 (HFSAL) participates in NADP(+) binding. Residue T160 coordinates substrate. NADP(+) is bound at residue 178 to 180 (DFA). 186-187 (RG) contacts substrate. D188 serves as the catalytic Charge relay system. NADP(+) is bound by residues 229–230 (HK) and 304–310 (RLPSQRR).

The protein belongs to the LDH2/MDH2 oxidoreductase family. As to quaternary structure, homodimer.

The enzyme catalyses L-proline + NAD(+) = 1-pyrroline-2-carboxylate + NADH + H(+). It carries out the reaction L-proline + NADP(+) = 1-pyrroline-2-carboxylate + NADPH + H(+). Catalyzes the reduction of Delta(1)-pyrroline-2-carboxylate (Pyr2C) to L-proline, using NADPH as the electron donor. May be involved in a degradation pathway that converts trans-3-hydroxy-L-proline (t3LHyp) to L-proline. The protein is Delta(1)-pyrroline-2-carboxylate reductase of Pseudomonas fluorescens (strain ATCC BAA-477 / NRRL B-23932 / Pf-5).